The following is a 151-amino-acid chain: Transcriptional regulator MraZ (151 aa).

SpoVT-AbrB domains follow at residues 5 to 56 (THRH…PLPT) and 85 to 128 (SEEL…DAAR).

It belongs to the MraZ family. Forms oligomers.

It localises to the cytoplasm. Its subcellular location is the nucleoid. The polypeptide is Transcriptional regulator MraZ (Acidithiobacillus ferrooxidans (strain ATCC 23270 / DSM 14882 / CIP 104768 / NCIMB 8455) (Ferrobacillus ferrooxidans (strain ATCC 23270))).